The chain runs to 436 residues: MIVPDLFVAHFREAAPYIRQMRGKTLVAGIDDRLLEGDTLNKFAADIGLLSQLGIRLVLIHGARHFLDRHAAAQGRTPHYCRGLRVTDETSLEQAQQFAGTVRSRFEAALCGSVSGFARAPSVPLVSGNFLTARPIGVIDGTDMEYAGVIRKTDTAALRFQLDAGNIVWLPPLGHSYSGKTFHLDMLQTAASVAVSLQAEKLVYLTLSDGISRPDGTLAVTLSAQEAQSLAEHAGGETRRLISSAVAALEGGVHRVQILNGAADGSLLQELFTRNGIGTSIAKEAFVSIRQAHSGDIPHIAALIRPLEEQGILLHRSREYLENHISEFSILEHDGNLYGCAALKTFAEADCGEIACLAVSPQAQDGGYGERLLAHIIDKARGIGISRLFALSTNTGEWFAERGFQTASEDELPETRRKDYRSNGRNSHILVRRLHR.

One can recognise an N-acetyltransferase domain in the interval 287–436 (VSIRQAHSGD…SHILVRRLHR (150 aa)).

This sequence belongs to the acetyltransferase family. ArgA subfamily.

It localises to the cytoplasm. The enzyme catalyses L-glutamate + acetyl-CoA = N-acetyl-L-glutamate + CoA + H(+). Its pathway is amino-acid biosynthesis; L-arginine biosynthesis; N(2)-acetyl-L-ornithine from L-glutamate: step 1/4. This chain is Amino-acid acetyltransferase (argA), found in Neisseria meningitidis serogroup A / serotype 4A (strain DSM 15465 / Z2491).